The primary structure comprises 498 residues: Calcium uptake protein, mitochondrial (498 aa).

Residues 1–29 (MPALSHYRSVSSLPSVDRSFLLIQRLRIH) constitute a mitochondrion transit peptide. 4 consecutive EF-hand domains span residues 216–241 (EFFM…VTLL), 243–278 (IPES…MRSQ), 329–364 (LTEE…AADA), and 437–472 (LSDN…RERD). 9 residues coordinate Ca(2+): Asp-222, Asp-224, Asp-226, Glu-233, Asp-256, Asp-258, Asn-260, Glu-262, and Glu-267. Ca(2+) is bound by residues Asp-450, Asn-452, Asp-454, Asn-456, and Glu-461.

Belongs to the MICU1 family. MICU1 subfamily. In terms of tissue distribution, expressed in both green and non-green tissues, including roots, shoots, floral buds and pollen.

It is found in the mitochondrion inner membrane. It localises to the mitochondrion intermembrane space. Its function is as follows. Calcium-binding protein maintaining matrix calcium levels at low concentration. Regulates mitochondrial calcium dynamics in planta by restricting influx. This chain is Calcium uptake protein, mitochondrial, found in Arabidopsis thaliana (Mouse-ear cress).